Consider the following 656-residue polypeptide: Methionine--tRNA ligase (656 aa).

Positions 13–23 (YYPSGNLHIGH) match the 'HIGH' region motif. The 'KMSKS' region motif lies at 308–312 (KMSKS). Lys311 is an ATP binding site. The 101-residue stretch at 556–656 (DFDKVEIKAA…SAIPNGAVIK (101 aa)) folds into the tRNA-binding domain.

The protein belongs to the class-I aminoacyl-tRNA synthetase family. MetG type 2B subfamily. As to quaternary structure, homodimer.

The protein localises to the cytoplasm. It catalyses the reaction tRNA(Met) + L-methionine + ATP = L-methionyl-tRNA(Met) + AMP + diphosphate. In terms of biological role, is required not only for elongation of protein synthesis but also for the initiation of all mRNA translation through initiator tRNA(fMet) aminoacylation. This chain is Methionine--tRNA ligase, found in Staphylococcus epidermidis (strain ATCC 12228 / FDA PCI 1200).